Reading from the N-terminus, the 86-residue chain is Large ribosomal subunit protein uL23 (86 aa).

Belongs to the universal ribosomal protein uL23 family. Part of the 50S ribosomal subunit. Contacts protein L29.

In terms of biological role, binds to 23S rRNA. One of the proteins that surrounds the polypeptide exit tunnel on the outside of the ribosome. This Pyrococcus abyssi (strain GE5 / Orsay) protein is Large ribosomal subunit protein uL23.